Reading from the N-terminus, the 718-residue chain is Exostosin-2 (718 aa).

Residues 1 to 25 (MCASVKYNIRGPALIPRMKTKHRIY) lie on the Cytoplasmic side of the membrane. The chain crosses the membrane as a helical; Signal-anchor for type II membrane protein span at residues 26–46 (YITLFSIVLLGLIATGMFQFW). The Lumenal portion of the chain corresponds to 47–718 (PHSIESSGDW…LKSFPNIGSL (672 aa)). Cystine bridges form between Cys85–Cys90, Cys96–Cys151, Cys286–Cys300, and Cys318–Cys339. The N-linked (GlcNAc...) asparagine glycan is linked to Asn288. UDP contacts are provided by Leu461, Arg465, Asn490, and Asn517. Positions 465, 490, 517, 522, 538, 539, and 540 each coordinate UDP-N-acetyl-alpha-D-glucosamine. 2 residues coordinate UDP: Asp538 and Asp539. Residue Asp540 participates in Mn(2+) binding. A protein-binding residues include Tyr582 and Ser584. Cys626 and Cys676 are disulfide-bonded. The UDP-N-acetyl-alpha-D-glucosamine site is built by Glu627 and Asp628. The N-linked (GlcNAc...) asparagine glycan is linked to Asn637. Residues Lys651 and Lys653 each coordinate a protein. Arg673 contacts UDP-N-acetyl-alpha-D-glucosamine.

Belongs to the glycosyltransferase 47 family. Part of the heparan sulfate polymerase, a dimeric complex composed of EXT1 and EXT2. Could also form homooligomeric complexes. Interacts with NDST1. Interacts with GALNT5. It depends on Mn(2+) as a cofactor. A soluble form is generated by proteolytic processing. Post-translationally, N-glycosylated at Asn-637.

Its subcellular location is the golgi apparatus membrane. It localises to the golgi apparatus. The protein resides in the cis-Golgi network membrane. It is found in the endoplasmic reticulum membrane. The protein localises to the secreted. The catalysed reaction is 3-O-{[(1-&gt;4)-beta-D-GlcA-(1-&gt;4)-alpha-D-GlcNAc](n)-(1-&gt;4)-beta-D-GlcA-(1-&gt;3)-beta-D-Gal-(1-&gt;3)-beta-D-Gal-(1-&gt;4)-beta-D-Xyl}-L-seryl-[protein] + UDP-N-acetyl-alpha-D-glucosamine = 3-O-{alpha-D-GlcNAc-[(1-&gt;4)-beta-D-GlcA-(1-&gt;4)-alpha-D-GlcNAc](n)-(1-&gt;4)-beta-D-GlcA-(1-&gt;3)-beta-D-Gal-(1-&gt;3)-beta-D-Gal-(1-&gt;4)-beta-D-Xyl}-L-seryl-[protein] + UDP + H(+). It functions in the pathway protein modification; protein glycosylation. Its function is as follows. Glycosyltransferase forming with EXT1 the heterodimeric heparan sulfate polymerase which catalyzes the elongation of the heparan sulfate glycan backbone. Glycan backbone extension consists in the alternating transfer of (1-&gt;4)-beta-D-GlcA and (1-&gt;4)-alpha-D-GlcNAc residues from their respective UDP-sugar donors. Both EXT1 and EXT2 are required for the full activity of the polymerase since EXT1 bears the N-acetylglucosaminyl-proteoglycan 4-beta-glucuronosyltransferase activity within the complex while EXT2 carries the glucuronosyl-N-acetylglucosaminyl-proteoglycan 4-alpha-N-acetylglucosaminyltransferase activity. Heparan sulfate proteoglycans are ubiquitous components of the extracellular matrix and play an important role in tissue homeostasis and signaling. The polypeptide is Exostosin-2 (Bos taurus (Bovine)).